We begin with the raw amino-acid sequence, 130 residues long: Small ribosomal subunit protein uS8 (130 aa).

It belongs to the universal ribosomal protein uS8 family. In terms of assembly, part of the 30S ribosomal subunit.

One of the primary rRNA binding proteins, it binds directly to 16S rRNA central domain where it helps coordinate assembly of the platform of the 30S subunit. This Methanosarcina barkeri (strain Fusaro / DSM 804) protein is Small ribosomal subunit protein uS8.